The primary structure comprises 639 residues: 1-deoxy-D-xylulose-5-phosphate synthase (639 aa).

Residues histidine 76 and alanine 117–serine 119 each bind thiamine diphosphate. Aspartate 148 contributes to the Mg(2+) binding site. Thiamine diphosphate is bound by residues glycine 149–serine 150, asparagine 181, tyrosine 288, and glutamate 370. Residue asparagine 181 participates in Mg(2+) binding.

The protein belongs to the transketolase family. DXPS subfamily. Homodimer. Mg(2+) serves as cofactor. It depends on thiamine diphosphate as a cofactor.

The enzyme catalyses D-glyceraldehyde 3-phosphate + pyruvate + H(+) = 1-deoxy-D-xylulose 5-phosphate + CO2. The protein operates within metabolic intermediate biosynthesis; 1-deoxy-D-xylulose 5-phosphate biosynthesis; 1-deoxy-D-xylulose 5-phosphate from D-glyceraldehyde 3-phosphate and pyruvate: step 1/1. In terms of biological role, catalyzes the acyloin condensation reaction between C atoms 2 and 3 of pyruvate and glyceraldehyde 3-phosphate to yield 1-deoxy-D-xylulose-5-phosphate (DXP). This Leptothrix cholodnii (strain ATCC 51168 / LMG 8142 / SP-6) (Leptothrix discophora (strain SP-6)) protein is 1-deoxy-D-xylulose-5-phosphate synthase.